Consider the following 201-residue polypeptide: 3-isopropylmalate dehydratase small subunit (201 aa).

It belongs to the LeuD family. LeuD type 1 subfamily. In terms of assembly, heterodimer of LeuC and LeuD.

It carries out the reaction (2R,3S)-3-isopropylmalate = (2S)-2-isopropylmalate. It participates in amino-acid biosynthesis; L-leucine biosynthesis; L-leucine from 3-methyl-2-oxobutanoate: step 2/4. In terms of biological role, catalyzes the isomerization between 2-isopropylmalate and 3-isopropylmalate, via the formation of 2-isopropylmaleate. The sequence is that of 3-isopropylmalate dehydratase small subunit from Shewanella halifaxensis (strain HAW-EB4).